The chain runs to 403 residues: Phosphoglycerate kinase (403 aa).

Substrate is bound by residues 24 to 26 (DLN), R39, 62 to 65 (HLGR), R121, and R161. ATP is bound by residues K211, G299, E330, and 359 to 362 (GGDS).

This sequence belongs to the phosphoglycerate kinase family. Monomer.

Its subcellular location is the cytoplasm. The catalysed reaction is (2R)-3-phosphoglycerate + ATP = (2R)-3-phospho-glyceroyl phosphate + ADP. It functions in the pathway carbohydrate degradation; glycolysis; pyruvate from D-glyceraldehyde 3-phosphate: step 2/5. This is Phosphoglycerate kinase from Rhodococcus opacus (strain B4).